A 161-amino-acid polypeptide reads, in one-letter code: Nucleotide-binding protein BTH_I0730 (161 aa).

Belongs to the YajQ family.

Functionally, nucleotide-binding protein. This chain is Nucleotide-binding protein BTH_I0730, found in Burkholderia thailandensis (strain ATCC 700388 / DSM 13276 / CCUG 48851 / CIP 106301 / E264).